A 142-amino-acid polypeptide reads, in one-letter code: Nitrogen fixation protein NifU 2 (142 aa).

The disordered stretch occupies residues 1–36; the sequence is MKDLFDESLTLDTGSAAPGTAPGRPRRRQPAGGKAP. The segment covering 14–23 has biased composition (low complexity); the sequence is GSAAPGTAPG.

This sequence belongs to the NifU family.

May be involved in the formation or repair of [Fe-S] clusters present in iron-sulfur proteins. This chain is Nitrogen fixation protein NifU 2 (nifU2), found in Rhodobacter capsulatus (Rhodopseudomonas capsulata).